A 668-amino-acid polypeptide reads, in one-letter code: Major S-layer protein (668 aa).

The signal sequence occupies residues 1-24 (MKRFAAVTLAALMLLTVFASAASA). 10 N-linked (GlcNAc...) asparagine glycosylation sites follow: Asn-36, Asn-65, Asn-111, Asn-265, Asn-583, Asn-596, Asn-602, Asn-608, Asn-617, and Asn-635. A disordered region spans residues 584-650 (ETTSITKPDE…ESNGSPGFGV (67 aa)). Positions 596-611 (NETVSDNETMPDNTSS) are enriched in polar residues. Over residues 631–641 (EPTDNETEPDE) the composition is skewed to acidic residues. A helical membrane pass occupies residues 644-664 (GSPGFGVVLGLAGLLGVVYLV).

This sequence belongs to the Methanosarcinales S-layer protein family. Glycosylated.

The protein resides in the secreted. The protein localises to the cell wall. Its subcellular location is the S-layer. It localises to the cell membrane. Functionally, S-layer protein. The S-layer is a paracrystalline mono-layered assembly of proteins which coat the surface of the cell. The polypeptide is Major S-layer protein (Methanosarcina barkeri (strain Fusaro / DSM 804)).